Here is a 229-residue protein sequence, read N- to C-terminus: Putative N-acetylmannosamine-6-phosphate 2-epimerase 2 (229 aa).

Belongs to the NanE family.

It catalyses the reaction an N-acyl-D-glucosamine 6-phosphate = an N-acyl-D-mannosamine 6-phosphate. Its pathway is amino-sugar metabolism; N-acetylneuraminate degradation; D-fructose 6-phosphate from N-acetylneuraminate: step 3/5. Converts N-acetylmannosamine-6-phosphate (ManNAc-6-P) to N-acetylglucosamine-6-phosphate (GlcNAc-6-P). The chain is Putative N-acetylmannosamine-6-phosphate 2-epimerase 2 (nanE2) from Salmonella typhimurium (strain LT2 / SGSC1412 / ATCC 700720).